A 647-amino-acid chain; its full sequence is Carotenoid phi-ring synthase (647 aa).

FAD contacts are provided by residues alanine 67, 86–87 (EA), lysine 94, and tyrosine 120. Positions 322–416 (VASIPKREVP…VREAGEMLVI (95 aa)) constitute a Rieske domain. 4 residues coordinate [2Fe-2S] cluster: cysteine 362, histidine 364, cysteine 380, and histidine 383. The FAD site is built by aspartate 601 and methionine 612.

It belongs to the carotenoid/retinoid oxidoreductase family. FAD serves as cofactor. It depends on [2Fe-2S] cluster as a cofactor.

The enzyme catalyses a carotenoid beta-end derivative + 2 A = a carotenoid phi-end derivative + 2 AH2. It functions in the pathway carotenoid biosynthesis. Its function is as follows. Involved in the biosynthesis of chlorobactene, a carotenoid with aromatic end group. Catalyzes the introduction of two additional double bonds into the ionone ring of gamma-carotene to produce chlorobactene. The reaction includes an intramolecular methyl transfer from position C1 to position C2 of the ring. The polypeptide is Carotenoid phi-ring synthase (Chlorobaculum tepidum (strain ATCC 49652 / DSM 12025 / NBRC 103806 / TLS) (Chlorobium tepidum)).